The following is a 163-amino-acid chain: 3-dehydroquinate dehydratase (163 aa).

Residue Tyr28 is the Proton acceptor of the active site. Residues Asn80, His86, and Asp93 each coordinate substrate. The active-site Proton donor is His106. Substrate-binding positions include 107-108 and Arg117; that span reads IS.

It belongs to the type-II 3-dehydroquinase family. As to quaternary structure, homododecamer.

The enzyme catalyses 3-dehydroquinate = 3-dehydroshikimate + H2O. Its pathway is metabolic intermediate biosynthesis; chorismate biosynthesis; chorismate from D-erythrose 4-phosphate and phosphoenolpyruvate: step 3/7. Its function is as follows. Catalyzes a trans-dehydration via an enolate intermediate. This Bradyrhizobium sp. (strain BTAi1 / ATCC BAA-1182) protein is 3-dehydroquinate dehydratase.